A 298-amino-acid polypeptide reads, in one-letter code: ADP/ATP translocase 2 (298 aa).

At Met1 the chain carries N-acetylmethionine. At 1-7 the chain is on the mitochondrial intermembrane side; it reads MTDAAVS. Thr2 carries the N-acetylthreonine; in ADP/ATP translocase 2, N-terminally processed modification. A Solcar 1 repeat occupies 6 to 98; the sequence is VSFAKDFLAG…FAFKDKYKQI (93 aa). Ser7 is subject to Phosphoserine. A helical transmembrane segment spans residues 8–37; that stretch reads FAKDFLAGGVAAAISKTAVAPIERVKLLLQ. Lys23 bears the N6-malonyllysine mark. The Mitochondrial matrix portion of the chain corresponds to 38 to 74; sequence VQHASKQITADKQYKGIMDCVVRIPKEQGVLSFWRGN. At Lys43 the chain carries N6-succinyllysine. Lys52 bears the N6,N6,N6-trimethyllysine; alternate mark. Position 52 is an N6,N6-dimethyllysine; alternate (Lys52). Lys52 bears the N6-methyllysine; alternate mark. The helical transmembrane segment at 75–99 threads the bilayer; sequence LANVIRYFPTQALNFAFKDKYKQIF. ADP-binding residues include Arg80 and Lys92. N6-malonyllysine is present on residues Lys92 and Lys96. At 100-109 the chain is on the mitochondrial intermembrane side; sequence LGGVDKRTQF. Lys105 carries the N6-acetyllysine; alternate modification. Position 105 is an N6-succinyllysine; alternate (Lys105). The chain crosses the membrane as a helical span at residues 110–130; it reads WRYFAGNLASGGAAGATSLCF. Solcar repeat units lie at residues 111–201 and 212–297; these read RYFA…AKGM and ISWM…IKKY. Over 131-178 the chain is Mitochondrial matrix; it reads VYPLDFARTRLAADVGKAGDAREFKGLGDCLVKITKSDGIRGLYQGFN. Lys147 is subject to N6-methyllysine; alternate. Lys147 and Lys155 each carry N6-acetyllysine; alternate. An N6-succinyllysine; alternate mark is found at Lys147 and Lys155. The residue at position 147 (Lys147) is an N6-malonyllysine; alternate. Residues Lys163 and Lys166 each carry the N6-acetyllysine modification. A helical membrane pass occupies residues 179-199; the sequence is VSVQGIIIYRAAYFGIYDTAK. Over 200-210 the chain is Mitochondrial intermembrane; it reads GMLPDPKNTHI. Residues 211 to 231 form a helical membrane-spanning segment; it reads FISWMIAQSVTAVAGLTSYPF. The Mitochondrial matrix portion of the chain corresponds to 232–273; sequence DTVRRRMMMQSGRKGSDIMYTGTIDCWKKIARDEGSKAFFKG. Arg235 lines the ADP pocket. The important for transport activity stretch occupies residues 235–240; that stretch reads RRRMMM. Residues 235-240 carry the Nucleotide carrier signature motif motif; it reads RRRMMM. Residue Lys268 is modified to N6-acetyllysine; alternate. Lys268 carries the post-translational modification N6-succinyllysine; alternate. Residues 274 to 291 traverse the membrane as a helical segment; it reads AWSNVLRGMGGAFVLVLY. Over 292–298 the chain is Mitochondrial intermembrane; that stretch reads DEIKKYT.

Belongs to the mitochondrial carrier (TC 2.A.29) family. As to quaternary structure, monomer. Component of the MMXD complex, which includes CIAO1, ERCC2, CIAO2B, MMS19 and SLC25A5/ANT2. Interacts with AK4. Interacts with TIMM44; leading to inhibit the presequence translocase TIMM23, thereby promoting stabilization of PINK1. In terms of processing, trimethylated by ANTKMT at Lys-52.

Its subcellular location is the mitochondrion inner membrane. The protein resides in the membrane. The catalysed reaction is ADP(in) + ATP(out) = ADP(out) + ATP(in). The enzyme catalyses H(+)(in) = H(+)(out). The matrix-open state (m-state) is inhibited by the membrane-permeable bongkrekic acid (BKA). The cytoplasmic-open state (c-state) is inhibited by the membrane-impermeable toxic inhibitor carboxyatractyloside (CATR). Proton transporter activity is inhibited by ADP:ATP antiporter activity. ADP:ATP antiporter that mediates import of ADP into the mitochondrial matrix for ATP synthesis, and export of ATP out to fuel the cell. Cycles between the cytoplasmic-open state (c-state) and the matrix-open state (m-state): operates by the alternating access mechanism with a single substrate-binding site intermittently exposed to either the cytosolic (c-state) or matrix (m-state) side of the inner mitochondrial membrane. In addition to its ADP:ATP antiporter activity, also involved in mitochondrial uncoupling and mitochondrial permeability transition pore (mPTP) activity. Plays a role in mitochondrial uncoupling by acting as a proton transporter: proton transport uncouples the proton flows via the electron transport chain and ATP synthase to reduce the efficiency of ATP production and cause mitochondrial thermogenesis. Proton transporter activity is inhibited by ADP:ATP antiporter activity, suggesting that SLC25A5/ANT2 acts as a master regulator of mitochondrial energy output by maintaining a delicate balance between ATP production (ADP:ATP antiporter activity) and thermogenesis (proton transporter activity). Proton transporter activity requires free fatty acids as cofactor, but does not transport it. Probably mediates mitochondrial uncoupling in tissues that do not express UCP1. Also plays a key role in mPTP opening, a non-specific pore that enables free passage of the mitochondrial membranes to solutes of up to 1.5 kDa, and which contributes to cell death. It is however unclear if SLC25A5/ANT2 constitutes a pore-forming component of mPTP or regulates it. Acts as a regulator of mitophagy independently of ADP:ATP antiporter activity: promotes mitophagy via interaction with TIMM44, leading to inhibit the presequence translocase TIMM23, thereby promoting stabilization of PINK1. As part of the mitotic spindle-associated MMXD complex it may play a role in chromosome segregation. The protein is ADP/ATP translocase 2 of Tachyglossus aculeatus aculeatus (Southeast Australian short-beaked echidna).